The chain runs to 376 residues: N-acetyldiaminopimelate deacetylase (376 aa).

The active site involves Asp-69. Glu-128 (proton acceptor) is an active-site residue.

This sequence belongs to the peptidase M20A family. N-acetyldiaminopimelate deacetylase subfamily.

The catalysed reaction is N-acetyl-(2S,6S)-2,6-diaminopimelate + H2O = (2S,6S)-2,6-diaminopimelate + acetate. Its pathway is amino-acid biosynthesis; L-lysine biosynthesis via DAP pathway; LL-2,6-diaminopimelate from (S)-tetrahydrodipicolinate (acetylase route): step 3/3. Catalyzes the conversion of N-acetyl-diaminopimelate to diaminopimelate and acetate. The polypeptide is N-acetyldiaminopimelate deacetylase (Streptococcus pneumoniae (strain CGSP14)).